We begin with the raw amino-acid sequence, 1117 residues long: Protein rliB (1117 aa).

Residues 1-23 (MKNINNKILKIFILFLAICSVKS) form the signal peptide. Residues Asn-136, Asn-195, Asn-279, and Asn-318 are each glycosylated (N-linked (GlcNAc...) asparagine). The region spanning 266–392 (STWSNNLVPQ…YHNSWTKLAS (127 aa)) is the G8 domain. PbH1 repeat units follow at residues 522 to 544 (VQKS…TIHG) and 545 to 567 (TNNL…YLED). N-linked (GlcNAc...) asparagine glycans are attached at residues Asn-547 and Asn-605. Residues 621–642 (NAYNTIIGNSASGGWAGFSFPN) form a PbH1 3 repeat. N-linked (GlcNAc...) asparagine glycans are attached at residues Asn-728, Asn-845, Asn-1030, Asn-1044, Asn-1091, and Asn-1107.

Belongs to the comF family.

It is found in the secreted. In Dictyostelium discoideum (Social amoeba), this protein is Protein rliB (rliB).